Here is a 360-residue protein sequence, read N- to C-terminus: Magnesium transporter NIPA2 (360 aa).

The Extracellular portion of the chain corresponds to 1-9 (MSQGRGKYD). Residues 10–30 (FYIGLGLAMSSSIFIGGSFIL) traverse the membrane as a helical segment. Residues 31–56 (KKKGLLRLARKGSMRAGQGGHAYLKE) are Cytoplasmic-facing. A helical membrane pass occupies residues 57–77 (WLWWAGLLSMGAGEVANFAAY). Position 78 (alanine 78) is a topological domain, extracellular. The helical transmembrane segment at 79–99 (FAPATLVTPLGALSVLVSAIL) threads the bilayer. Topologically, residues 100-107 (SSYFLNER) are cytoplasmic. Residues 108–128 (LNLHGKIGCLLSILGSTVMVI) traverse the membrane as a helical segment. The Extracellular portion of the chain corresponds to 129–149 (HAPKEEEIETLNEMSHKLGDP). A helical membrane pass occupies residues 150-170 (GFVVFATLVVIVALILIFVVG). At 171-175 (PRHGQ) the chain is on the cytoplasmic side. Residues 176–196 (TNILVYITICSVIGAFSVSCV) traverse the membrane as a helical segment. Residues 197–215 (KGLGIAIKELFAGKPVLRH) lie on the Extracellular side of the membrane. Residues 216–236 (PLAWILLLSLIVCVSTQINYL) traverse the membrane as a helical segment. Topologically, residues 237-246 (NRALDIFNTS) are cytoplasmic. The helical transmembrane segment at 247-267 (IVTPIYYVFFTTSVLTCSAIL) threads the bilayer. The Extracellular segment spans residues 268–278 (FKEWQDMPVDD). A helical transmembrane segment spans residues 279–299 (VIGTLSGFFTIIVGIFLLHAF). Over 300 to 360 (KDVSFSLASL…SRRNGNLTAF (61 aa)) the chain is Cytoplasmic.

It belongs to the NIPA family. Widely expressed.

It localises to the cell membrane. The protein resides in the early endosome. It catalyses the reaction Mg(2+)(in) = Mg(2+)(out). Acts as a selective Mg(2+) transporter. The sequence is that of Magnesium transporter NIPA2 (NIPA2) from Homo sapiens (Human).